The following is a 274-amino-acid chain: Acyl-[acyl-carrier-protein]--UDP-N-acetylglucosamine O-acyltransferase (274 aa).

Belongs to the transferase hexapeptide repeat family. LpxA subfamily. Homotrimer.

It localises to the cytoplasm. It catalyses the reaction a (3R)-hydroxyacyl-[ACP] + UDP-N-acetyl-alpha-D-glucosamine = a UDP-3-O-[(3R)-3-hydroxyacyl]-N-acetyl-alpha-D-glucosamine + holo-[ACP]. It participates in glycolipid biosynthesis; lipid IV(A) biosynthesis; lipid IV(A) from (3R)-3-hydroxytetradecanoyl-[acyl-carrier-protein] and UDP-N-acetyl-alpha-D-glucosamine: step 1/6. In terms of biological role, involved in the biosynthesis of lipid A, a phosphorylated glycolipid that anchors the lipopolysaccharide to the outer membrane of the cell. The protein is Acyl-[acyl-carrier-protein]--UDP-N-acetylglucosamine O-acyltransferase of Bartonella bacilliformis (strain ATCC 35685 / KC583 / Herrer 020/F12,63).